The sequence spans 232 residues: Large ribosomal subunit protein uL1 (232 aa).

The protein belongs to the universal ribosomal protein uL1 family. As to quaternary structure, part of the 50S ribosomal subunit.

Functionally, binds directly to 23S rRNA. The L1 stalk is quite mobile in the ribosome, and is involved in E site tRNA release. Its function is as follows. Protein L1 is also a translational repressor protein, it controls the translation of the L11 operon by binding to its mRNA. The polypeptide is Large ribosomal subunit protein uL1 (Rhizobium rhizogenes (strain K84 / ATCC BAA-868) (Agrobacterium radiobacter)).